A 427-amino-acid polypeptide reads, in one-letter code: ETS domain-containing protein Elk-1 (427 aa).

The ETS DNA-binding region spans 5 to 86 (VTLWQFLLQL…SGQKFVYKFV (82 aa)). 3 disordered regions span residues 116-146 (ATVH…GLAR), 166-202 (LQPQ…SPNP), and 226-252 (PNQK…VEGP). Glycyl lysine isopeptide (Lys-Gly) (interchain with G-Cter in SUMO) cross-links involve residues Lys229, Lys248, and Lys253. Residues 300-310 (STSTTEITQPQ) show a composition bias toward polar residues. The segment at 300–350 (STSTTEITQPQKGRKPRDLELPLSPSLLGGQGPERTPGSGTSSGLQAQGPA) is disordered. Position 323 is a phosphoserine; by MAPK1 (Ser323). Residues Thr335, Thr352, Thr362, and Thr367 each carry the phosphothreonine; by MAPK1 modification. The interval 348-398 (GPALTPSLLPTHTLTPVLLTPSSLPPSIHFWSTLSPIAPRSPAKLSFQFPS) is sufficient for interaction with MAD2L2. Thr380 carries an O-linked (GlcNAc) threonine glycan. Ser382 carries the post-translational modification Phosphoserine; by MAPK1 and MAPK8. Position 388 is a phosphoserine; by MAPK1 (Ser388). Thr416 is subject to Phosphothreonine; by MAPK1. Phosphoserine; by MAPK1 is present on Ser421.

The protein belongs to the ETS family. As to quaternary structure, interacts in its sumoylated form with PIAS2/PIASX which enhances its transcriptional activator activity. Interacts with MAD2L2; the interaction is direct and promotes phosphorylation by the kinases MAPK8 and/or MAPK9. Interacts with POU1F1. Sumoylation represses transcriptional activator activity as it results in recruitment of HDAC2 to target gene promoters which leads to decreased histone acetylation and reduced transactivator activity. It also regulates nuclear retention. In terms of processing, on mitogenic stimulation, phosphorylated on C-terminal serine and threonine residues by MAPK1. Ser-382 and Ser-388 are the preferred sites for MAPK1. In vitro, phosphorylation by MAPK1 potentiates ternary complex formation with the serum responses factors, SRE and SRF. Also phosphorylated on Ser-382 by MAPK8 and/or MAKP9. Phosphorylation leads to loss of sumoylation and restores transcriptional activator activity. Phosphorylated and activated by CAMK4, MAPK11, MAPK12 and MAPK14. Upon bFGF stimulus, phosphorylated by PAK1. Phosphorylated by PRP4K at Thr-416; phosphorylation activation ELK1 transcriptional activity.

Its subcellular location is the nucleus. Transcription factor that binds to purine-rich DNA sequences. Forms a ternary complex with SRF and the ETS and SRF motifs of the serum response element (SRE) on the promoter region of immediate early genes such as FOS and IER2. Induces target gene transcription upon JNK and MAPK-signaling pathways stimulation. The polypeptide is ETS domain-containing protein Elk-1 (Rattus norvegicus (Rat)).